The primary structure comprises 368 residues: 2-aminoethylphosphonate--pyruvate transaminase (368 aa).

N6-(pyridoxal phosphate)lysine is present on Lys-192.

Belongs to the class-V pyridoxal-phosphate-dependent aminotransferase family. PhnW subfamily. As to quaternary structure, homodimer. Requires pyridoxal 5'-phosphate as cofactor.

It carries out the reaction (2-aminoethyl)phosphonate + pyruvate = phosphonoacetaldehyde + L-alanine. Involved in phosphonate degradation. The chain is 2-aminoethylphosphonate--pyruvate transaminase from Pseudomonas putida (strain W619).